The chain runs to 124 residues: Prefoldin subunit beta (124 aa).

Belongs to the prefoldin subunit beta family. Heterohexamer of two alpha and four beta subunits.

It localises to the cytoplasm. Functionally, molecular chaperone capable of stabilizing a range of proteins. Seems to fulfill an ATP-independent, HSP70-like function in archaeal de novo protein folding. This is Prefoldin subunit beta (pfdB) from Thermoplasma acidophilum (strain ATCC 25905 / DSM 1728 / JCM 9062 / NBRC 15155 / AMRC-C165).